The following is a 332-amino-acid chain: Tetraacyldisaccharide 4'-kinase (332 aa).

60–67 (TVGGTGKT) lines the ATP pocket.

This sequence belongs to the LpxK family.

The enzyme catalyses a lipid A disaccharide + ATP = a lipid IVA + ADP + H(+). It functions in the pathway glycolipid biosynthesis; lipid IV(A) biosynthesis; lipid IV(A) from (3R)-3-hydroxytetradecanoyl-[acyl-carrier-protein] and UDP-N-acetyl-alpha-D-glucosamine: step 6/6. Its function is as follows. Transfers the gamma-phosphate of ATP to the 4'-position of a tetraacyldisaccharide 1-phosphate intermediate (termed DS-1-P) to form tetraacyldisaccharide 1,4'-bis-phosphate (lipid IVA). The protein is Tetraacyldisaccharide 4'-kinase of Pseudomonas aeruginosa (strain LESB58).